The following is a 203-amino-acid chain: Twist-related protein 1 (203 aa).

Low complexity predominate over residues 1 to 18 (MMQDVSSSPVSPADDSLS). Residues 1 to 106 (MMQDVSSSPV…GGGSPQSYEE (106 aa)) form a disordered region. The segment covering 34-43 (RGGRKRRSSR) has biased composition (basic residues). 2 stretches are compositionally biased toward gly residues: residues 46 to 65 (AGGG…GGDE) and 80 to 100 (GCGG…GGGS). One can recognise a bHLH domain in the interval 109–160 (TQRVMANVRERQRTQSLNEAFAALRKIIPTLPSDKLSKIQTLKLAARYIDFL). The interval 162 to 192 (QVLQSDELDSKMASCSYVAHERLSYAFSVWR) is sufficient for transactivation activity.

Efficient DNA binding requires dimerization with another bHLH protein. Homodimer or heterodimer with E proteins such as TCF3. ID1 binds preferentially to TCF3 but does not interact efficiently with TWIST1 so ID1 levels control the amount of TCF3 available to dimerize with TWIST and thus determine the type of dimer formed.

The protein resides in the nucleus. Its function is as follows. Acts as a transcriptional regulator. Inhibits myogenesis by sequestrating E proteins, inhibiting trans-activation by MEF2, and inhibiting DNA-binding by MYOD1 through physical interaction. This interaction probably involves the basic domains of both proteins. Also represses expression of pro-inflammatory cytokines such as TNFA and IL1B. Regulates cranial suture patterning and fusion. Activates transcription as a heterodimer with E proteins. Regulates gene expression differentially, depending on dimer composition. Homodimers induce expression of FGFR2 and POSTN while heterodimers repress FGFR2 and POSTN expression and induce THBS1 expression. Heterodimerization is also required for osteoblast differentiation. Represses the activity of the circadian transcriptional activator: NPAS2-BMAL1 heterodimer. In Saguinus oedipus (Cotton-top tamarin), this protein is Twist-related protein 1 (TWIST1).